Consider the following 287-residue polypeptide: Large ribosomal subunit protein uL2 (287 aa).

A disordered region spans residues 221–287; sequence RGSVMNPCDH…SKRSRGGRDS (67 aa). Residues 271–287 are compositionally biased toward basic residues; it reads LRKRRKTSKRSRGGRDS.

The protein belongs to the universal ribosomal protein uL2 family. As to quaternary structure, part of the 50S ribosomal subunit. Forms a bridge to the 30S subunit in the 70S ribosome.

One of the primary rRNA binding proteins. Required for association of the 30S and 50S subunits to form the 70S ribosome, for tRNA binding and peptide bond formation. It has been suggested to have peptidyltransferase activity; this is somewhat controversial. Makes several contacts with the 16S rRNA in the 70S ribosome. This Synechococcus sp. (strain CC9902) protein is Large ribosomal subunit protein uL2.